Reading from the N-terminus, the 69-residue chain is Large ribosomal subunit protein bL31 (69 aa).

Zn(2+) is bound by residues cysteine 16, cysteine 18, cysteine 37, and cysteine 40.

This sequence belongs to the bacterial ribosomal protein bL31 family. Type A subfamily. In terms of assembly, part of the 50S ribosomal subunit. Zn(2+) is required as a cofactor.

Binds the 23S rRNA. In Teredinibacter turnerae (strain ATCC 39867 / T7901), this protein is Large ribosomal subunit protein bL31.